The sequence spans 100 residues: Large ribosomal subunit protein eL21 (100 aa).

This sequence belongs to the eukaryotic ribosomal protein eL21 family.

This Pyrobaculum arsenaticum (strain DSM 13514 / JCM 11321 / PZ6) protein is Large ribosomal subunit protein eL21.